The chain runs to 193 residues: Thioredoxin M4, chloroplastic (193 aa).

The N-terminal 82 residues, 1–82 (MASLLDSVTV…RIACEAQDTT (82 aa)), are a transit peptide targeting the chloroplast. A Thioredoxin domain is found at 83–192 (AAAVEVPNLS…LEKTIERFLV (110 aa)). Residues C116 and C119 each act as nucleophile in the active site. C116 and C119 are oxidised to a cystine.

Belongs to the thioredoxin family. Plant M-type subfamily.

It is found in the plastid. Its subcellular location is the chloroplast stroma. Its function is as follows. Thiol-disulfide oxidoreductase involved in the redox regulation of enzyme of the oxidative pentose phosphate pathway. Under reducing conditions, inhibits the glucose-6-phosphate dehydrogenase. This Arabidopsis thaliana (Mouse-ear cress) protein is Thioredoxin M4, chloroplastic.